A 157-amino-acid polypeptide reads, in one-letter code: Ribosome maturation factor RimP (157 aa).

The protein belongs to the RimP family.

It localises to the cytoplasm. Functionally, required for maturation of 30S ribosomal subunits. In Thermosynechococcus vestitus (strain NIES-2133 / IAM M-273 / BP-1), this protein is Ribosome maturation factor RimP.